We begin with the raw amino-acid sequence, 422 residues long: Probable FBD-associated F-box protein At1g32375 (422 aa).

The F-box domain occupies 1–53 (MDKLSQLPEALLVRILSLLSAKDVVSTMVLSKRWQFLWMLVPKLIYDDSYQAI). Positions 342–392 (CWNEPSAVPECLLTSLETLEWVKYEGTEEEKEVAAFILRSGSCLKKVTISS) constitute an FBD domain.

The chain is Probable FBD-associated F-box protein At1g32375 from Arabidopsis thaliana (Mouse-ear cress).